Consider the following 639-residue polypeptide: Synaptotagmin-16 (639 aa).

Positions 95-119 are enriched in polar residues; the sequence is NSDLQDSVQTASPTLGQQAEDSSSV. The disordered stretch occupies residues 95–191; it reads NSDLQDSVQT…SSESDEDVTK (97 aa). Residues 121-134 are compositionally biased toward pro residues; it reads PPWPSKIPGAPKPQ. Positions 142 to 151 are enriched in basic and acidic residues; that stretch reads EEDHHSERQR. Residues 174-187 show a composition bias toward acidic residues; the sequence is GDDEEPSTSSESDE. A C2 1 domain is found at 344 to 463; that stretch reads KCGDLDVIFE…HPEGEMKVTL (120 aa). The disordered stretch occupies residues 470 to 496; the sequence is NLSSGESPLSPSVVSHSDSASSTQSLS. Residues 476-496 show a composition bias toward low complexity; that stretch reads SPLSPSVVSHSDSASSTQSLS. A C2 2 domain is found at 499 to 634; it reads GVPELLVGLS…SKGQQTCRWH (136 aa).

The protein belongs to the synaptotagmin family. In terms of assembly, homodimer. Can also form heterodimers. As to expression, highly expressed in heart and testis. Moderately expressed in kidney.

In terms of biological role, may be involved in the trafficking and exocytosis of secretory vesicles in non-neuronal tissues. Is Ca(2+)-independent. The polypeptide is Synaptotagmin-16 (Syt16) (Mus musculus (Mouse)).